The following is a 224-amino-acid chain: MTEQVQANEAETLAAGADERIIRETGIDAKVASIIEPVINTLGFRLVRVRLSGLNGQTLQIMAERPDGTMTVDDCELVSRTVAPVLDVEDPISGKYHLEISSPGIDRPLVRKSDFADWAGHIAKVETSVVHEGRKKFRGRIVLGDAESVVIESDQISYGSEPVVRIPFDLISDARLVLTDDLIRDALRKDKALREGRIPGDDLGSEEAGEQSDETASGEAEDKE.

The tract at residues 194 to 224 (REGRIPGDDLGSEEAGEQSDETASGEAEDKE) is disordered. A compositionally biased stretch (acidic residues) spans 203–213 (LGSEEAGEQSD).

This sequence belongs to the RimP family.

It is found in the cytoplasm. Required for maturation of 30S ribosomal subunits. This chain is Ribosome maturation factor RimP, found in Brucella anthropi (strain ATCC 49188 / DSM 6882 / CCUG 24695 / JCM 21032 / LMG 3331 / NBRC 15819 / NCTC 12168 / Alc 37) (Ochrobactrum anthropi).